The primary structure comprises 154 residues: Protein AE7-like 1 (154 aa).

The protein belongs to the MIP18 family.

Functionally, may play a role in chromosome segregation through establishment of sister chromatid cohesion. Unable to complement ae7 mutants, and thus probably not involved in the cytosolic iron-sulfur assembly (CIA) pathway. This Arabidopsis thaliana (Mouse-ear cress) protein is Protein AE7-like 1.